The chain runs to 260 residues: Indole-3-glycerol phosphate synthase (260 aa).

The protein belongs to the TrpC family.

It catalyses the reaction 1-(2-carboxyphenylamino)-1-deoxy-D-ribulose 5-phosphate + H(+) = (1S,2R)-1-C-(indol-3-yl)glycerol 3-phosphate + CO2 + H2O. It participates in amino-acid biosynthesis; L-tryptophan biosynthesis; L-tryptophan from chorismate: step 4/5. This is Indole-3-glycerol phosphate synthase from Staphylococcus aureus (strain bovine RF122 / ET3-1).